A 632-amino-acid polypeptide reads, in one-letter code: Extracellular metalloproteinase 5 (632 aa).

Positions 1 to 20 (MHGLLLAAGLLSLPLHVLAH) are cleaved as a signal peptide. The propeptide occupies 21–244 (PQPGTSLAGR…HNVVDYVSHA (224 aa)). An N-linked (GlcNAc...) asparagine glycan is attached at asparagine 284. Histidine 427 contributes to the Zn(2+) binding site. Glutamate 428 is an active-site residue. Position 431 (histidine 431) interacts with Zn(2+). N-linked (GlcNAc...) asparagine glycosylation is found at asparagine 591 and asparagine 620.

It belongs to the peptidase M36 family. Requires Zn(2+) as cofactor.

It is found in the secreted. Functionally, secreted metalloproteinase probably acting as a virulence factor. In Arthroderma otae (strain ATCC MYA-4605 / CBS 113480) (Microsporum canis), this protein is Extracellular metalloproteinase 5 (MEP5).